The following is a 2128-amino-acid chain: Spectrin beta chain, erythrocytic (2128 aa).

Residues 1–15 show a composition bias toward polar residues; sequence MTSATEFENVGNQPP. Positions 1 to 30 are disordered; that stretch reads MTSATEFENVGNQPPFSRINARWDAPDDEL. The segment at 2–275 is actin-binding; it reads TSATEFENVG…IITYVVAFYH (274 aa). Position 36 is a phosphoserine (Ser-36). Calponin-homology (CH) domains follow at residues 54-158 and 173-278; these read VVQK…LRFQ and RSAK…HYFS. At Thr-104 the chain carries Phosphothreonine. Spectrin repeat units follow at residues 303 to 411, 416 to 517, 521 to 627, 630 to 733, 736 to 838, 845 to 942, 950 to 1050, 1054 to 1157, 1162 to 1250, 1267 to 1368, 1381 to 1455, 1473 to 1574, 1576 to 1680, 1682 to 1784, 1789 to 1890, 1897 to 1997, and 2004 to 2064; these read MIEK…LALR, RQEF…QRLE, ALQK…QLEQ, RLWK…DLQD, NFFQ…KLQE, VFGE…REAV, NYCV…LSLG, KLQA…NTLT, FQEF…RHKK, ELQN…EQLS, ADLN…FLDL, LQIS…RLRD, HEAQ…RLEN, YHLF…MQLL, DLHR…RAQL, FRFF…DRLH, and QFSR…KPTT. Ser-1289 is subject to Phosphoserine. Ser-2034 bears the Phosphoserine mark. Positions 2062 to 2108 are disordered; the sequence is PTTLELKERQTPERPTEEPGPQEEEGETAGEAPQVHHAATERTSPVS. Phosphothreonine occurs at positions 2064, 2072, and 2101. Residues 2066-2078 are compositionally biased toward basic and acidic residues; it reads ELKERQTPERPTE. Residues Ser-2105, Ser-2108, Ser-2114, Ser-2116, and Ser-2119 each carry the phosphoserine modification.

It belongs to the spectrin family. In terms of assembly, composed of nonhomologous chains, alpha and beta, which aggregate to form dimers, tetramers, and higher polymers. Interacts with BCAM.

Its subcellular location is the cytoplasm. It localises to the cytoskeleton. The protein resides in the cell cortex. Functionally, spectrin is the major constituent of the cytoskeletal network underlying the erythrocyte plasma membrane. It associates with band 4.1 and actin to form the cytoskeletal superstructure of the erythrocyte plasma membrane. The chain is Spectrin beta chain, erythrocytic (Sptb) from Mus musculus (Mouse).